Consider the following 277-residue polypeptide: Glutamate racemase (277 aa).

Substrate-binding positions include 9 to 10 (DS) and 41 to 42 (YG). Residue Cys73 is the Proton donor/acceptor of the active site. 74–75 (NT) lines the substrate pocket. Cys183 (proton donor/acceptor) is an active-site residue. 184 to 185 (TH) contributes to the substrate binding site.

The protein belongs to the aspartate/glutamate racemases family.

It catalyses the reaction L-glutamate = D-glutamate. It participates in cell wall biogenesis; peptidoglycan biosynthesis. Its function is as follows. Provides the (R)-glutamate required for cell wall biosynthesis. This Shewanella denitrificans (strain OS217 / ATCC BAA-1090 / DSM 15013) protein is Glutamate racemase.